Reading from the N-terminus, the 130-residue chain is Small ribosomal subunit protein uS8 (130 aa).

Belongs to the universal ribosomal protein uS8 family. As to quaternary structure, part of the 30S ribosomal subunit. Contacts proteins S5 and S12.

In terms of biological role, one of the primary rRNA binding proteins, it binds directly to 16S rRNA central domain where it helps coordinate assembly of the platform of the 30S subunit. The sequence is that of Small ribosomal subunit protein uS8 from Buchnera aphidicola subsp. Schizaphis graminum (strain Sg).